A 154-amino-acid chain; its full sequence is Large ribosomal subunit protein uL13 (154 aa).

The protein belongs to the universal ribosomal protein uL13 family. Part of the 50S ribosomal subunit.

Its function is as follows. This protein is one of the early assembly proteins of the 50S ribosomal subunit, although it is not seen to bind rRNA by itself. It is important during the early stages of 50S assembly. This is Large ribosomal subunit protein uL13 from Brucella anthropi (strain ATCC 49188 / DSM 6882 / CCUG 24695 / JCM 21032 / LMG 3331 / NBRC 15819 / NCTC 12168 / Alc 37) (Ochrobactrum anthropi).